We begin with the raw amino-acid sequence, 519 residues long: Na(+)/H(+) exchange regulatory cofactor NHE-RF3 (519 aa).

3 PDZ domains span residues 9–90, 134–215, and 243–323; these read ECKL…LDGD, RLCY…VDKE, and IVEM…VDKE. S148, S192, S250, S334, and S348 each carry phosphoserine. A disordered region spans residues 347-374; sequence GSVKEAPAPTPTSLEVSSPPDTTEEVDH. Residues 357 to 367 are compositionally biased toward polar residues; the sequence is PTSLEVSSPPD. The 81-residue stretch at 378–458 folds into the PDZ 4 domain; the sequence is LCRLAKGENG…NVTLLVCGKK (81 aa). Phosphothreonine is present on T451. The disordered stretch occupies residues 473–519; it reads SLADPPDTPPDSKEGIVVESKHDSHMAKERAHSTASHSSSNSEDTEM. The segment covering 482-504 has biased composition (basic and acidic residues); it reads PDSKEGIVVESKHDSHMAKERAH. Phosphoserine occurs at positions 492, 508, 510, 511, 512, and 514. A compositionally biased stretch (low complexity) spans 505–519; the sequence is STASHSSSNSEDTEM.

The protein belongs to the NHER family. In terms of assembly, interacts with PDZK1IP1 and ABCC2. Binds to the C-terminal region of SLC26A3. Interacts (via PDZ domains 1 and 3) with SCARB1 (C-terminal domain). Forms a heterodimeric complex with NHERF1. Interacts with AKAP2, BCR, CFTR, SLCO1A1, SLC22A12, SLC22A4, SLC22A5, NHERF2 and SLC17A1. Component of a complex, composed of PDZK1, SYNGAP1, KLHL17 and NMDA receptors. Interacts (via PDZ1 domain) directly with KLHL17; the interaction is important for integrity of actin cytoskeleton structures in neurons. Interacts (via C-terminal PDZ domain) with SLC26A6 (via C-terminal domain). Interacts (via C-terminal PDZ domain) with SLC9A3 (via C-terminal domain). Interacts (via the first PDZ domain) with PTGIR (via non-isoprenylated C-terminus). Interacts (via PDZ domains 1 and 3) with SLC5A8 (via PDZ-binding motif); interaction increases nicotinate transport activity of SLC5A8.

The protein localises to the membrane. It is found in the cell membrane. A scaffold protein that connects plasma membrane proteins and regulatory components, regulating their surface expression in epithelial cells apical domains. May be involved in the coordination of a diverse range of regulatory processes for ion transport and second messenger cascades. In complex with NHERF1, may cluster proteins that are functionally dependent in a mutual fashion and modulate the trafficking and the activity of the associated membrane proteins. May play a role in the cellular mechanisms associated with multidrug resistance through its interaction with ABCC2 and PDZK1IP1. May potentiate the CFTR chloride channel activity. Required for normal cell-surface expression of SCARB1. Plays a role in maintaining normal plasma cholesterol levels via its effects on SCARB1. Plays a role in the normal localization and function of the chloride-anion exchanger SLC26A6 to the plasma membrane in the brush border of the proximal tubule of the kidney. May be involved in the regulation of proximal tubular Na(+)-dependent inorganic phosphate cotransport therefore playing an important role in tubule function. The sequence is that of Na(+)/H(+) exchange regulatory cofactor NHE-RF3 (PDZK1) from Pongo abelii (Sumatran orangutan).